Here is a 251-residue protein sequence, read N- to C-terminus: Hydroxyacylglutathione hydrolase (251 aa).

His-53, His-55, Asp-57, His-58, His-110, Asp-127, and His-165 together coordinate Zn(2+).

It belongs to the metallo-beta-lactamase superfamily. Glyoxalase II family. Monomer. Zn(2+) is required as a cofactor.

The enzyme catalyses an S-(2-hydroxyacyl)glutathione + H2O = a 2-hydroxy carboxylate + glutathione + H(+). It functions in the pathway secondary metabolite metabolism; methylglyoxal degradation; (R)-lactate from methylglyoxal: step 2/2. Thiolesterase that catalyzes the hydrolysis of S-D-lactoyl-glutathione to form glutathione and D-lactic acid. This Salmonella arizonae (strain ATCC BAA-731 / CDC346-86 / RSK2980) protein is Hydroxyacylglutathione hydrolase.